We begin with the raw amino-acid sequence, 450 residues long: Protein indeterminate-domain 13 (450 aa).

Residue Ser-54 is modified to Phosphoserine. 2 C2H2-type zinc fingers span residues 64–86 and 106–136; these read FFCE…KRGH and YICP…SRKH. Residues 128–135 carry the Nuclear localization signal motif; the sequence is IKKHFSRK. The segment at 141–165 adopts a C2H2-type 2; degenerate zinc-finger fold; the sequence is WKCDKCSKKYAVISDWKAHNKICGS. Zn(2+) is bound by residues Cys-143, Cys-146, His-159, Cys-163, Cys-170, Cys-172, His-185, and Cys-189. The CCHC-type 2; atypical zinc finger occupies 168-191; the sequence is FRCDCGTLFSRKDSFISHRSFCDV. Positions 178–190 are SHR-binding; it reads RKDSFISHRSFCD. Over residues 248–263 the composition is skewed to polar residues; the sequence is FGQKFTNSNPTQQQPN. A disordered region spans residues 248–280; it reads FGQKFTNSNPTQQQPNALALSSPPSPRSTSDSV.

It localises to the nucleus. Probable transcription factor. This Arabidopsis thaliana (Mouse-ear cress) protein is Protein indeterminate-domain 13.